Consider the following 447-residue polypeptide: NADH-ubiquinone oxidoreductase chain 4 (447 aa).

Transmembrane regions (helical) follow at residues 28–48, 56–76, 89–109, 110–130, 141–161, 183–203, 213–233, 246–266, 273–293, 298–318, 331–351, 374–394, and 409–431; these read IFLLTFMFMINLSSLNYFNYI, MVSYGLILLSFWICGLMLMAS, FVFMILFLLFMLVLTFSSMSV, FMFYLFFEASLIPTLFLILGW, VYLLFYTLLASLPLLIGIFYI, LLYLSLVFAFLVKMPMFLVHL, PVSGSMILAGILLKLGGYGLL, YNYWWISISLVGGVLISLVCL, ALIAYSSVAHMGIVLSGLLTM, LTGSYALMIAHGLCSSGLFCL, LLINKGLLNFMPTLSLWWFLL, IVSWSWITMIMLSFLSFFSAA, and YSGVYFFSVGTTREFLLLMLHWL.

It belongs to the complex I subunit 4 family.

It localises to the mitochondrion membrane. It carries out the reaction a ubiquinone + NADH + 5 H(+)(in) = a ubiquinol + NAD(+) + 4 H(+)(out). In terms of biological role, core subunit of the mitochondrial membrane respiratory chain NADH dehydrogenase (Complex I) that is believed to belong to the minimal assembly required for catalysis. Complex I functions in the transfer of electrons from NADH to the respiratory chain. The immediate electron acceptor for the enzyme is believed to be ubiquinone. The protein is NADH-ubiquinone oxidoreductase chain 4 (mt:ND4) of Anopheles gambiae (African malaria mosquito).